A 217-amino-acid chain; its full sequence is GRB2-related adapter protein (217 aa).

The SH3 1 domain occupies 1–58 (MESVALYSFQATESDELAFNKGDTLKILNMEDDQNWYKAELRGVEGFIPKNYIRVKPH). An SH2 domain is found at 60–154 (WYSGRISRQL…QIFLRDEEPL (95 aa)). Residues 158–217 (PGACFAQAQFDFSAQDPSQLSFRRGDIIEVLERPDPHWWRGRSCGRVGFFPRSYVQPVHL) enclose the SH3 2 domain.

It belongs to the GRB2/sem-5/DRK family. Associates through its SH2 domain with ligand-activated receptors for stem cell factor (KIT) and erythropoietin (EPOR). Also forms a stable complex with the Bcr-Abl oncoprotein. GRAP is associated with the Ras guanine nucleotide exchange factor SOS1, primarily through its N-terminal SH3 domain. Interacts with phosphorylated LAT upon TCR activation. Interacts with SHB.

The protein resides in the membrane. Its subcellular location is the synapse. In terms of biological role, couples signals from receptor and cytoplasmic tyrosine kinases to the Ras signaling pathway. Plays a role in the inner ear and in hearing. This is GRB2-related adapter protein from Homo sapiens (Human).